The primary structure comprises 387 residues: F420-dependent formate dehydrogenase 1 subunit beta (387 aa).

2 consecutive 4Fe-4S ferredoxin-type domains span residues 275-298 and 326-355; these read TIEE…VCPV and VRMS…ARIF. Cys286, Cys289, Cys292, Cys296, Cys335, Cys338, Cys341, and Cys345 together coordinate [4Fe-4S] cluster. The interval 366-387 is disordered; the sequence is LGYRPGVDDEAPPALGGSCPTQ.

This sequence belongs to the FrhB family. In terms of assembly, dimer of an alpha (FdhA1) and a beta (FdhB1) subunit. Requires [4Fe-4S] cluster as cofactor. FAD is required as a cofactor. It depends on Zn(2+) as a cofactor.

The enzyme catalyses oxidized coenzyme F420-(gamma-L-Glu)(n) + formate + 2 H(+) = reduced coenzyme F420-(gamma-L-Glu)(n) + CO2. Its function is as follows. Catalyzes the oxidation of formate to carbon dioxide, with coenzyme F420 as the electron acceptor. In vitro can also use methyl viologen as electron acceptor. The polypeptide is F420-dependent formate dehydrogenase 1 subunit beta (Methanococcus maripaludis (strain DSM 14266 / JCM 13030 / NBRC 101832 / S2 / LL)).